Here is a 306-residue protein sequence, read N- to C-terminus: UPF0282 protein Pars_1056 (306 aa).

Belongs to the UPF0282 family.

The protein is UPF0282 protein Pars_1056 of Pyrobaculum arsenaticum (strain DSM 13514 / JCM 11321 / PZ6).